A 367-amino-acid polypeptide reads, in one-letter code: Peptide chain release factor 2 (367 aa).

Residue glutamine 247 is modified to N5-methylglutamine.

This sequence belongs to the prokaryotic/mitochondrial release factor family. In terms of processing, methylated by PrmC. Methylation increases the termination efficiency of RF2.

The protein localises to the cytoplasm. Peptide chain release factor 2 directs the termination of translation in response to the peptide chain termination codons UGA and UAA. The sequence is that of Peptide chain release factor 2 from Caulobacter sp. (strain K31).